A 491-amino-acid polypeptide reads, in one-letter code: Glutamyl-tRNA(Gln) amidotransferase subunit A (491 aa).

Catalysis depends on charge relay system residues Lys-78 and Ser-158. Ser-182 serves as the catalytic Acyl-ester intermediate.

The protein belongs to the amidase family. GatA subfamily. In terms of assembly, heterotrimer of A, B and C subunits.

The catalysed reaction is L-glutamyl-tRNA(Gln) + L-glutamine + ATP + H2O = L-glutaminyl-tRNA(Gln) + L-glutamate + ADP + phosphate + H(+). Functionally, allows the formation of correctly charged Gln-tRNA(Gln) through the transamidation of misacylated Glu-tRNA(Gln) in organisms which lack glutaminyl-tRNA synthetase. The reaction takes place in the presence of glutamine and ATP through an activated gamma-phospho-Glu-tRNA(Gln). The sequence is that of Glutamyl-tRNA(Gln) amidotransferase subunit A from Nitrobacter winogradskyi (strain ATCC 25391 / DSM 10237 / CIP 104748 / NCIMB 11846 / Nb-255).